We begin with the raw amino-acid sequence, 305 residues long: Transcription factor bHLH18 (305 aa).

The interval 41-67 (LKTTHISPNLHPFSSSNPPPPKHQPSS) is disordered. Over residues 44–56 (THISPNLHPFSSS) the composition is skewed to polar residues. The region spanning 122-171 (SNAQDHILAERKRREKLTQRFVALSALIPGLKKMDKASVLGDAIKHIKYL) is the bHLH domain. The interval 201 to 224 (DENHQPSSSSSSDGNRNSSSSNLP) is disordered. The segment covering 207-222 (SSSSSSDGNRNSSSSN) has biased composition (low complexity).

In terms of assembly, homodimer. In terms of tissue distribution, expressed in roots.

The protein resides in the nucleus. The polypeptide is Transcription factor bHLH18 (BHLH18) (Arabidopsis thaliana (Mouse-ear cress)).